The following is a 72-amino-acid chain: uncharacterized protein (72 aa).

An N-terminal signal peptide occupies residues 1–22; the sequence is MQSNFIFATLLVLLSLLTFTYA. The Extracellular portion of the chain corresponds to 23 to 28; sequence SGSSSM. The chain crosses the membrane as a helical span at residues 29–49; it reads TSSSMPMFGGAIVAAFAFAIF. Over 50–72 the chain is Cytoplasmic; the sequence is SRLAQNFAPRAIFSLLPYHSVSC.

The protein resides in the membrane. This is an uncharacterized protein from Dictyostelium discoideum (Social amoeba).